The primary structure comprises 23 residues: uncharacterized protein (23 aa).

Residues Tyr-3–Ile-23 traverse the membrane as a helical segment.

The protein localises to the cell inner membrane. This is an uncharacterized protein from Escherichia coli (strain K12).